A 263-amino-acid chain; its full sequence is Hydroxyacylglutathione hydrolase (263 aa).

7 residues coordinate Zn(2+): His55, His57, Asp59, His60, His117, Asp134, and His172.

This sequence belongs to the metallo-beta-lactamase superfamily. Glyoxalase II family. In terms of assembly, monomer. Requires Zn(2+) as cofactor.

It catalyses the reaction an S-(2-hydroxyacyl)glutathione + H2O = a 2-hydroxy carboxylate + glutathione + H(+). It participates in secondary metabolite metabolism; methylglyoxal degradation; (R)-lactate from methylglyoxal: step 2/2. Thiolesterase that catalyzes the hydrolysis of S-D-lactoyl-glutathione to form glutathione and D-lactic acid. This is Hydroxyacylglutathione hydrolase from Shewanella baltica (strain OS185).